The sequence spans 118 residues: UPF0102 protein Sde_3146 (118 aa).

The protein belongs to the UPF0102 family.

This Saccharophagus degradans (strain 2-40 / ATCC 43961 / DSM 17024) protein is UPF0102 protein Sde_3146.